A 1146-amino-acid chain; its full sequence is Elicitor of plant defense protein 1 (1146 aa).

Disordered regions lie at residues 25–75 (DPLP…RLSN) and 156–226 (ARPP…PRQG). Residues 164–177 (RAERIKAEDSDQSG) show a composition bias toward basic and acidic residues. Positions 246–500 (PLNTDPNMHP…NLCTEAFSPL (255 aa)) constitute a uDENN domain. One can recognise a cDENN domain in the interval 522–656 (VNEIPGSRTI…HRRKLHALLQ (135 aa)). The 359-residue stretch at 658–1016 (AAPAKLRYGV…ERETKPGTTA (359 aa)) folds into the dDENN domain. The tract at residues 730 to 806 (LHSKVDPNKP…RRSSSFGVDK (77 aa)) is disordered. A compositionally biased stretch (basic and acidic residues) spans 732 to 743 (SKVDPNKPDRPG). A compositionally biased stretch (low complexity) spans 744-760 (TSKSTRTSPPSSVSPVS). Residues 769–783 (TPVSRSDSGFALTST) show a composition bias toward polar residues. Positions 784–797 (LREKRSRNFDEKTR) are enriched in basic and acidic residues. Residues 883–931 (GHCFNWEEGALSSSCSVCDDRAEGDGIYKCSGCSAFAHGRCLGCVSLAC) form a Phorbol-ester/DAG-type zinc finger. The tract at residues 1121-1146 (PRPEQRGTRGLVRKQVPSMLGTSPTN) is disordered.

The protein belongs to the EPD1 elicitor family. Interacts with host cotton EIR5A (AC A0A5J5T2N2) and EIR5D (AC A0A5J5NT52) and host N.benthamiana EIR (AC P0DXJ0).

It localises to the secreted. Its subcellular location is the host cell. Functionally, acts as an elicitor that triggers defense responses in both Nicotiana benthamiana and cotton plants. Triggers the accumulation of reactive oxygen species (ROS) and the activation of cell death in cotton plants. Induces significantly enhanced resistance of Nicotiana benthamiana to both the broad-host-range filamentous pathogen Botrytis cinerea and the semibiotrophic pathogen Phytophthora capsici. Stimulates the expression of EIR5A (AC A0A5J5T2N2) and EIR5D (AC A0A5J5NT52) in cotton plants and recognition of EPD1 potentiates EIRs to enhance cotton PAMP-triggered immunity (PTI). In Verticillium dahliae (strain VdLs.17 / ATCC MYA-4575 / FGSC 10137) (Verticillium wilt), this protein is Elicitor of plant defense protein 1.